A 32-amino-acid chain; its full sequence is Tail virion protein G7P (32 aa).

Residues 9 to 29 (LYQLIFNAGLVICFGLGVISG) form a helical membrane-spanning segment.

The protein belongs to the inovirus G7P protein family.

It is found in the virion. The protein resides in the host membrane. Its function is as follows. May initiate with G9P the virion concomitant assembly-budding process, by interacting with the packaging signal of the viral genome. The assembly-budding takes place at the host inner membrane. In turn, G7P and G9P are present at the end of the filamentous virion that emerges first from the bacterial host. This Escherichia phage If1 (Bacteriophage If1) protein is Tail virion protein G7P (VII).